The following is a 204-amino-acid chain: Recombination protein RecR (204 aa).

The C4-type zinc finger occupies 59–74 (CTRCNTFTELEICGTC). One can recognise a Toprim domain in the interval 82–181 (TLLCVVETPA…KVSRLARGVP (100 aa)).

The protein belongs to the RecR family.

Its function is as follows. May play a role in DNA repair. It seems to be involved in an RecBC-independent recombinational process of DNA repair. It may act with RecF and RecO. The chain is Recombination protein RecR from Cupriavidus metallidurans (strain ATCC 43123 / DSM 2839 / NBRC 102507 / CH34) (Ralstonia metallidurans).